A 1021-amino-acid chain; its full sequence is Sodium/potassium-transporting ATPase subunit alpha-1 (1021 aa).

The propeptide occupies 1-5 (MGKGA). The span at 1 to 11 (MGKGAGRDKYE) shows a compositional bias: basic and acidic residues. The disordered stretch occupies residues 1 to 31 (MGKGAGRDKYEPTATSEHGTKKKKAKERDMD). Residues 6–85 (GRDKYEPTAT…NTLTPPPTTP (80 aa)) are Cytoplasmic-facing. Residue Tyr-10 is modified to Phosphotyrosine. Ser-16 is subject to Phosphoserine; by PKC. The tract at residues 80–82 (PPP) is phosphoinositide-3 kinase binding. A helical transmembrane segment spans residues 86–106 (EWVKFCRQLFGGFSLLLWIGS). Over 107 to 129 (LLCFLAYGITSVMEGEPNSDNLY) the chain is Extracellular. Residues 130–150 (LGVVLAAVVIITGCFSYYQEA) form a helical membrane-spanning segment. Over 151–286 (KSSKIMESFK…GGKTPIAMEI (136 aa)) the chain is Cytoplasmic. The interval 214–233 (SSLTGESEPQTRSPDFSNEN) is disordered. A helical membrane pass occupies residues 287 to 306 (EHFIHLITGVAVFLGVSFFI). Residues 307 to 318 (LSLILEYTWLEA) are Extracellular-facing. Residues 319-336 (VIFLIGIIVANVPEGLLA) traverse the membrane as a helical segment. Residues 337-770 (TVTVCLTLTA…EEGRLIFDNL (434 aa)) lie on the Cytoplasmic side of the membrane. The 4-aspartylphosphate intermediate role is filled by Asp-374. Residue Lys-485 coordinates ATP. Residues Asp-715 and Asp-719 each contribute to the Mg(2+) site. A helical transmembrane segment spans residues 771–790 (KKSIAYTLTSNIPEITPFLI). Residues 791–800 (FIIANIPLPL) lie on the Extracellular side of the membrane. The helical transmembrane segment at 801–821 (GTCTILCIDLGTDMVPAISLA) threads the bilayer. The Cytoplasmic segment spans residues 822-841 (YEQAESDIMKRQPRNPKTDK). Residues 842-864 (LVNERLISMAYGQIGMIQALGGF) traverse the membrane as a helical segment. Over 865–916 (FTYFVIMAENGFLPSGLVGIRLQWDDRWINDVEDSYGQQWTFEQRKIVEFTC) the chain is Extracellular. Residues 917–936 (HTAFFVSIVVVQWADLIICK) traverse the membrane as a helical segment. At 937 to 949 (TRRNSVFQQGMKN) the chain is on the cytoplasmic side. At Ser-941 the chain carries Phosphoserine; by PKA. A helical membrane pass occupies residues 950-968 (KILIFGLFEETALAAFLSY). Residues 969 to 983 (CPGMDVALRMYPLKP) are Extracellular-facing. The chain crosses the membrane as a helical span at residues 984–1004 (TWWFCAFPYSLLIFLYDEIRK). The Cytoplasmic portion of the chain corresponds to 1005 to 1021 (LIIRRNPGGWVERETYY).

The protein belongs to the cation transport ATPase (P-type) (TC 3.A.3) family. Type IIC subfamily. In terms of assembly, the sodium/potassium-transporting ATPase is composed of a catalytic alpha subunit, an auxiliary non-catalytic beta subunit and an additional regulatory subunit. Phosphorylation on Tyr-10 modulates pumping activity.

Its subcellular location is the cell membrane. The protein resides in the sarcolemma. It catalyses the reaction K(+)(out) + Na(+)(in) + ATP + H2O = K(+)(in) + Na(+)(out) + ADP + phosphate + H(+). Its function is as follows. This is the catalytic component of the active enzyme, which catalyzes the hydrolysis of ATP coupled with the exchange of sodium and potassium ions across the plasma membrane. This action creates the electrochemical gradient of sodium and potassium ions, providing the energy for active transport of various nutrients. This chain is Sodium/potassium-transporting ATPase subunit alpha-1 (ATP1A1), found in Gallus gallus (Chicken).